A 61-amino-acid chain; its full sequence is Metallothionein-1A (61 aa).

The residue at position 1 (M1) is an N-acetylmethionine. Positions 1-29 (MDPNCSCATGGSCTCTGSCKCKECKCTSC) are beta. A divalent metal cation is bound by residues C5, C7, C13, C15, C19, C21, C24, C26, C29, C33, C34, C36, C37, C41, C44, C48, C50, and C57. Residues 30-61 (KKSCCSCCPMSCAKCAQGCICKGASEKCSCCA) form an alpha region. S58 is modified (phosphoserine). A divalent metal cation contacts are provided by C59 and C60.

It belongs to the metallothionein superfamily. Type 1 family. In terms of assembly, monomer.

Its function is as follows. Metallothioneins have a high content of cysteine residues that bind various heavy metals; these proteins are transcriptionally regulated by both heavy metals and glucocorticoids. This chain is Metallothionein-1A (MT1A), found in Homo sapiens (Human).